Reading from the N-terminus, the 355-residue chain is Peptide chain release factor 1 (355 aa).

Residue glutamine 233 is modified to N5-methylglutamine.

This sequence belongs to the prokaryotic/mitochondrial release factor family. Post-translationally, methylated by PrmC. Methylation increases the termination efficiency of RF1.

The protein localises to the cytoplasm. In terms of biological role, peptide chain release factor 1 directs the termination of translation in response to the peptide chain termination codons UAG and UAA. In Amoebophilus asiaticus (strain 5a2), this protein is Peptide chain release factor 1.